The sequence spans 450 residues: Probable ECA polymerase (450 aa).

11 helical membrane passes run 6-26 (FSGL…LTWF), 37-57 (VFFS…TSVL), 63-83 (VGVA…CFYA), 118-138 (VILM…NGFL), 155-175 (GVAL…VYFL), 181-201 (AWLF…MIVG), 207-227 (IIIA…ISLW), 228-248 (MLAA…LKRY), 341-361 (LVVM…GLII), 378-398 (YKAA…IVLA), and 410-430 (VFFI…YWLF).

Belongs to the WzyE family. In terms of assembly, probably part of a complex composed of WzxE, WzyE and WzzE.

The protein localises to the cell inner membrane. It functions in the pathway bacterial outer membrane biogenesis; enterobacterial common antigen biosynthesis. Functionally, probably involved in the polymerization of enterobacterial common antigen (ECA) trisaccharide repeat units. The chain is Probable ECA polymerase from Escherichia fergusonii (strain ATCC 35469 / DSM 13698 / CCUG 18766 / IAM 14443 / JCM 21226 / LMG 7866 / NBRC 102419 / NCTC 12128 / CDC 0568-73).